The following is a 229-amino-acid chain: Ribose-5-phosphate isomerase A (229 aa).

Substrate-binding positions include 28 to 31, 84 to 87, and 97 to 100; these read TGST, DGAD, and KGGG. Glutamate 106 functions as the Proton acceptor in the catalytic mechanism. Lysine 124 contributes to the substrate binding site.

This sequence belongs to the ribose 5-phosphate isomerase family. Homodimer.

The catalysed reaction is aldehydo-D-ribose 5-phosphate = D-ribulose 5-phosphate. Its pathway is carbohydrate degradation; pentose phosphate pathway; D-ribose 5-phosphate from D-ribulose 5-phosphate (non-oxidative stage): step 1/1. In terms of biological role, catalyzes the reversible conversion of ribose-5-phosphate to ribulose 5-phosphate. This chain is Ribose-5-phosphate isomerase A, found in Lacticaseibacillus paracasei (strain ATCC 334 / BCRC 17002 / CCUG 31169 / CIP 107868 / KCTC 3260 / NRRL B-441) (Lactobacillus paracasei).